The sequence spans 117 residues: Aspartate 1-decarboxylase (117 aa).

Catalysis depends on Ser25, which acts as the Schiff-base intermediate with substrate; via pyruvic acid. Position 25 is a pyruvic acid (Ser) (Ser25). Thr57 lines the substrate pocket. Residue Tyr58 is the Proton donor of the active site. 73–75 (GAA) contributes to the substrate binding site.

Belongs to the PanD family. In terms of assembly, heterooctamer of four alpha and four beta subunits. Pyruvate is required as a cofactor. In terms of processing, is synthesized initially as an inactive proenzyme, which is activated by self-cleavage at a specific serine bond to produce a beta-subunit with a hydroxyl group at its C-terminus and an alpha-subunit with a pyruvoyl group at its N-terminus.

The protein localises to the cytoplasm. The enzyme catalyses L-aspartate + H(+) = beta-alanine + CO2. It functions in the pathway cofactor biosynthesis; (R)-pantothenate biosynthesis; beta-alanine from L-aspartate: step 1/1. In terms of biological role, catalyzes the pyruvoyl-dependent decarboxylation of aspartate to produce beta-alanine. In Thermoanaerobacter pseudethanolicus (strain ATCC 33223 / 39E) (Clostridium thermohydrosulfuricum), this protein is Aspartate 1-decarboxylase.